The chain runs to 213 residues: Imidazole glycerol phosphate synthase subunit HisH (213 aa).

One can recognise a Glutamine amidotransferase type-1 domain in the interval 4-211; that stretch reads NLGVIDYGMG…LHWLHQGAEP (208 aa). The active-site Nucleophile is the cysteine 82. Active-site residues include histidine 186 and glutamate 188.

As to quaternary structure, heterodimer of HisH and HisF.

The protein resides in the cytoplasm. The catalysed reaction is 5-[(5-phospho-1-deoxy-D-ribulos-1-ylimino)methylamino]-1-(5-phospho-beta-D-ribosyl)imidazole-4-carboxamide + L-glutamine = D-erythro-1-(imidazol-4-yl)glycerol 3-phosphate + 5-amino-1-(5-phospho-beta-D-ribosyl)imidazole-4-carboxamide + L-glutamate + H(+). It catalyses the reaction L-glutamine + H2O = L-glutamate + NH4(+). It functions in the pathway amino-acid biosynthesis; L-histidine biosynthesis; L-histidine from 5-phospho-alpha-D-ribose 1-diphosphate: step 5/9. IGPS catalyzes the conversion of PRFAR and glutamine to IGP, AICAR and glutamate. The HisH subunit catalyzes the hydrolysis of glutamine to glutamate and ammonia as part of the synthesis of IGP and AICAR. The resulting ammonia molecule is channeled to the active site of HisF. This Synechococcus sp. (strain CC9902) protein is Imidazole glycerol phosphate synthase subunit HisH.